The primary structure comprises 31 residues: Cytochrome b6-f complex subunit 6 (31 aa).

A helical transmembrane segment spans residues 3–23 (TLTSYFGFLLVALTITLVLFI).

Belongs to the PetL family. In terms of assembly, the 4 large subunits of the cytochrome b6-f complex are cytochrome b6, subunit IV (17 kDa polypeptide, PetD), cytochrome f and the Rieske protein, while the 4 small subunits are PetG, PetL, PetM and PetN. The complex functions as a dimer.

It localises to the plastid. Its subcellular location is the chloroplast thylakoid membrane. Functionally, component of the cytochrome b6-f complex, which mediates electron transfer between photosystem II (PSII) and photosystem I (PSI), cyclic electron flow around PSI, and state transitions. PetL is important for photoautotrophic growth as well as for electron transfer efficiency and stability of the cytochrome b6-f complex. This is Cytochrome b6-f complex subunit 6 from Populus alba (White poplar).